The sequence spans 729 residues: Alpha-galactosidase AgaA (729 aa).

Residues Asp53, Trp199, 366-367 (DD), Arg443, 476-480 (KWDMN), Cys526, and Asp548 each bind substrate. Asp478 serves as the catalytic Nucleophile. Asp548 serves as the catalytic Proton donor.

This sequence belongs to the glycosyl hydrolase 36 family. Homotetramer.

The catalysed reaction is Hydrolysis of terminal, non-reducing alpha-D-galactose residues in alpha-D-galactosides, including galactose oligosaccharides, galactomannans and galactolipids.. With respect to regulation, not inhibited by D-galactose or sucrose. Inhibited by pharmaceutical drug 1-deoxygalactonojirimycin. Its function is as follows. Hydrolyzes the short-chain alpha-galactosaccharides raffinose and stachyose. The protein is Alpha-galactosidase AgaA of Geobacillus stearothermophilus (Bacillus stearothermophilus).